Here is a 421-residue protein sequence, read N- to C-terminus: CinA-like protein (421 aa).

Belongs to the CinA family.

The chain is CinA-like protein from Synechococcus elongatus (strain ATCC 33912 / PCC 7942 / FACHB-805) (Anacystis nidulans R2).